Consider the following 249-residue polypeptide: Ciliogenesis and planar polarity effector 2 (249 aa).

The tract at residues proline 46 to glutamate 249 is small GTPase-like. GTP is bound by residues glycine 58–threonine 65 and threonine 171–aspartate 174.

Belongs to the small GTPase superfamily. Rab family. As to quaternary structure, interacts with fuz.

The protein resides in the cytoplasm. The protein localises to the cytoskeleton. Its subcellular location is the cilium basal body. Functionally, potential effector of the planar cell polarity signaling pathway. Plays a role in targeted membrane trafficking most probably at the level of vesicle fusion with membranes. Involved in cilium biogenesis by regulating the transport of cargo proteins to the basal body and to the apical tips of cilia. More generally involved in exocytosis in secretory cells. The polypeptide is Ciliogenesis and planar polarity effector 2 (Xenopus laevis (African clawed frog)).